A 251-amino-acid polypeptide reads, in one-letter code: Protein unc-119 homolog B (251 aa).

Over residues 1 to 13 (MSGSNPKAATAGS) the composition is skewed to polar residues. The segment at 1-56 (MSGSNPKAATAGSQAGPGGLVAGKEEKKKAGGGVLNRLKARRQGPPHTPDDGSGAA) is disordered. Residue Ser2 is modified to N-acetylserine. Lys24 is modified (N6-acetyllysine). Tyr142 contacts tetradecanoate.

The protein belongs to the PDE6D/unc-119 family. In terms of assembly, found in a complex with ARL3, RP2 and UNC119B; RP2 induces hydrolysis of GTP ARL3 in the complex, leading to the release of UNC119B. Interacts with NPHP3 (when myristoylated). Interacts with CYS1 (when myristoylated). Interacts with MACIR; interaction only takes place when UNC119B is not liganded with myristoylated proteins.

It is found in the cell projection. It localises to the cilium. Myristoyl-binding protein that acts as a cargo adapter: specifically binds the myristoyl moiety of a subset of N-terminally myristoylated proteins and is required for their localization. Binds myristoylated NPHP3 and plays a key role in localization of NPHP3 to the primary cilium membrane. Does not bind all myristoylated proteins. Probably plays a role in trafficking proteins in photoreceptor cells. This is Protein unc-119 homolog B (Unc119b) from Mus musculus (Mouse).